The sequence spans 297 residues: MPVFKGSGVAIVTPFNEEGVNFEKLGELIEWHIKEGTDAIIICGTTGEASTMTQEEQQQAIKFTVEKVAGRIPVIAGTGSNNTAHAVEMSEYAQSAGADALLVITPYYNKTTQKGLVAHFTEIARHVDIPIIIYNVPSRTSLNMLPETYLELSKHVDNVVGVKEASGDIVQVAEIARIMGKSFEIYSGNDDQVIPIMSLGGLGVISVTANIIPAKIHEMTTAYLNGDIEKARDMQLELNPLNKALFIETNPIPVKTAMNLMGFNVGPLRLPLVEMSDKNLEYLKSVLSKYGLLKEAN.

Residue T46 coordinates pyruvate. Y134 functions as the Proton donor/acceptor in the catalytic mechanism. Catalysis depends on K163, which acts as the Schiff-base intermediate with substrate. Pyruvate is bound at residue I205.

It belongs to the DapA family. As to quaternary structure, homotetramer; dimer of dimers.

The protein localises to the cytoplasm. The enzyme catalyses L-aspartate 4-semialdehyde + pyruvate = (2S,4S)-4-hydroxy-2,3,4,5-tetrahydrodipicolinate + H2O + H(+). The protein operates within amino-acid biosynthesis; L-lysine biosynthesis via DAP pathway; (S)-tetrahydrodipicolinate from L-aspartate: step 3/4. In terms of biological role, catalyzes the condensation of (S)-aspartate-beta-semialdehyde [(S)-ASA] and pyruvate to 4-hydroxy-tetrahydrodipicolinate (HTPA). This is 4-hydroxy-tetrahydrodipicolinate synthase from Thermoanaerobacter pseudethanolicus (strain ATCC 33223 / 39E) (Clostridium thermohydrosulfuricum).